We begin with the raw amino-acid sequence, 227 residues long: MAHPAQLGFQDAASPIMEELMYFHDHTLMIVFLISSLVLYIISLMLTTELTHTSTMDAQEVETVWTILPAVILILIALPSLRILYMMDEITTPSLTLKTMGHQWYWSYEYTDYESLCFDSYMTPPLELDPGELRLLEVDNRVVLPTEMSIRMLISSEDVLHSWTVPSLGVKTDAIPGRLNQATLMTSRPGIYYGQCSEICGANHSFMPIVLELVPLKHFEEWLLSTL.

Residues 1 to 14 (MAHPAQLGFQDAAS) lie on the Mitochondrial intermembrane side of the membrane. The chain crosses the membrane as a helical span at residues 15 to 45 (PIMEELMYFHDHTLMIVFLISSLVLYIISLM). At 46-59 (LTTELTHTSTMDAQ) the chain is on the mitochondrial matrix side. The helical transmembrane segment at 60–87 (EVETVWTILPAVILILIALPSLRILYMM) threads the bilayer. At 88–227 (DEITTPSLTL…HFEEWLLSTL (140 aa)) the chain is on the mitochondrial intermembrane side. Cu cation-binding residues include His-161, Cys-196, Glu-198, Cys-200, His-204, and Met-207. Glu-198 contacts Mg(2+).

It belongs to the cytochrome c oxidase subunit 2 family. As to quaternary structure, component of the cytochrome c oxidase (complex IV, CIV), a multisubunit enzyme composed of 14 subunits. The complex is composed of a catalytic core of 3 subunits MT-CO1, MT-CO2 and MT-CO3, encoded in the mitochondrial DNA, and 11 supernumerary subunits COX4I, COX5A, COX5B, COX6A, COX6B, COX6C, COX7A, COX7B, COX7C, COX8 and NDUFA4, which are encoded in the nuclear genome. The complex exists as a monomer or a dimer and forms supercomplexes (SCs) in the inner mitochondrial membrane with NADH-ubiquinone oxidoreductase (complex I, CI) and ubiquinol-cytochrome c oxidoreductase (cytochrome b-c1 complex, complex III, CIII), resulting in different assemblies (supercomplex SCI(1)III(2)IV(1) and megacomplex MCI(2)III(2)IV(2)). Found in a complex with TMEM177, COA6, COX18, COX20, SCO1 and SCO2. Interacts with TMEM177 in a COX20-dependent manner. Interacts with COX20. Interacts with COX16. The cofactor is Cu cation.

It localises to the mitochondrion inner membrane. The catalysed reaction is 4 Fe(II)-[cytochrome c] + O2 + 8 H(+)(in) = 4 Fe(III)-[cytochrome c] + 2 H2O + 4 H(+)(out). Component of the cytochrome c oxidase, the last enzyme in the mitochondrial electron transport chain which drives oxidative phosphorylation. The respiratory chain contains 3 multisubunit complexes succinate dehydrogenase (complex II, CII), ubiquinol-cytochrome c oxidoreductase (cytochrome b-c1 complex, complex III, CIII) and cytochrome c oxidase (complex IV, CIV), that cooperate to transfer electrons derived from NADH and succinate to molecular oxygen, creating an electrochemical gradient over the inner membrane that drives transmembrane transport and the ATP synthase. Cytochrome c oxidase is the component of the respiratory chain that catalyzes the reduction of oxygen to water. Electrons originating from reduced cytochrome c in the intermembrane space (IMS) are transferred via the dinuclear copper A center (CU(A)) of subunit 2 and heme A of subunit 1 to the active site in subunit 1, a binuclear center (BNC) formed by heme A3 and copper B (CU(B)). The BNC reduces molecular oxygen to 2 water molecules using 4 electrons from cytochrome c in the IMS and 4 protons from the mitochondrial matrix. The chain is Cytochrome c oxidase subunit 2 (MT-CO2) from Microcebus tavaratra (Northern rufous mouse lemur).